A 189-amino-acid chain; its full sequence is Protein GrpE (189 aa).

Residues 1 to 12 (MDKKKHGSHAGA) are compositionally biased toward basic residues. The tract at residues 1–36 (MDKKKHGSHAGAHHTDEPAAETVAPAAEGAPAAADR) is disordered. The segment covering 20 to 34 (AETVAPAAEGAPAAA) has biased composition (low complexity).

The protein belongs to the GrpE family. In terms of assembly, homodimer.

It is found in the cytoplasm. Participates actively in the response to hyperosmotic and heat shock by preventing the aggregation of stress-denatured proteins, in association with DnaK and GrpE. It is the nucleotide exchange factor for DnaK and may function as a thermosensor. Unfolded proteins bind initially to DnaJ; upon interaction with the DnaJ-bound protein, DnaK hydrolyzes its bound ATP, resulting in the formation of a stable complex. GrpE releases ADP from DnaK; ATP binding to DnaK triggers the release of the substrate protein, thus completing the reaction cycle. Several rounds of ATP-dependent interactions between DnaJ, DnaK and GrpE are required for fully efficient folding. The sequence is that of Protein GrpE from Geobacter metallireducens (strain ATCC 53774 / DSM 7210 / GS-15).